The chain runs to 276 residues: MLLRFTKMHGLGNDFMVLDLVSQHAHILPKHAKQWGDRHTGIGFDQLLLVEAPNNPDVDFRYRIFNSDGSEVEQCGNGARCFARFVLDKRLTAKKQIRVETKGGIIELEIRSDGQISVDMGPPRLVPEEIPFQAAEQAKSYSLDVDGQTVELAAVSMGNPHAVLRVDDINNAPVHTLGPKIEHHPRFPARVNVGFLHVVDRQRAQLRVWERGAGETQACGTGACAAAVAAISQGWMDSPLLIDLPGGRLSIEWAGPGHPVMMTGPATRVYEGQVRL.

3 residues coordinate substrate: N13, Q46, and N66. C75 (proton donor) is an active-site residue. Residues 76–77, N159, N192, and 210–211 contribute to the substrate site; these read GN and ER. Catalysis depends on C219, which acts as the Proton acceptor. 220 to 221 serves as a coordination point for substrate; it reads GT.

It belongs to the diaminopimelate epimerase family. As to quaternary structure, homodimer.

The protein resides in the cytoplasm. It catalyses the reaction (2S,6S)-2,6-diaminopimelate = meso-2,6-diaminopimelate. It functions in the pathway amino-acid biosynthesis; L-lysine biosynthesis via DAP pathway; DL-2,6-diaminopimelate from LL-2,6-diaminopimelate: step 1/1. Its function is as follows. Catalyzes the stereoinversion of LL-2,6-diaminopimelate (L,L-DAP) to meso-diaminopimelate (meso-DAP), a precursor of L-lysine and an essential component of the bacterial peptidoglycan. The chain is Diaminopimelate epimerase from Pseudomonas syringae pv. tomato (strain ATCC BAA-871 / DC3000).